Consider the following 122-residue polypeptide: Large ribosomal subunit protein uL14 (122 aa).

The protein belongs to the universal ribosomal protein uL14 family. Part of the 50S ribosomal subunit. Forms a cluster with proteins L3 and L19. In the 70S ribosome, L14 and L19 interact and together make contacts with the 16S rRNA in bridges B5 and B8.

Functionally, binds to 23S rRNA. Forms part of two intersubunit bridges in the 70S ribosome. The protein is Large ribosomal subunit protein uL14 of Paraburkholderia phytofirmans (strain DSM 17436 / LMG 22146 / PsJN) (Burkholderia phytofirmans).